The chain runs to 134 residues: ATP synthase epsilon chain (134 aa).

It belongs to the ATPase epsilon chain family. As to quaternary structure, F-type ATPases have 2 components, CF(1) - the catalytic core - and CF(0) - the membrane proton channel. CF(1) has five subunits: alpha(3), beta(3), gamma(1), delta(1), epsilon(1). CF(0) has three main subunits: a, b and c.

The protein resides in the cell membrane. Produces ATP from ADP in the presence of a proton gradient across the membrane. This is ATP synthase epsilon chain from Staphylococcus saprophyticus subsp. saprophyticus (strain ATCC 15305 / DSM 20229 / NCIMB 8711 / NCTC 7292 / S-41).